A 154-amino-acid chain; its full sequence is Large ribosomal subunit protein bL9c (154 aa).

Belongs to the bacterial ribosomal protein bL9 family.

The protein localises to the plastid. Its subcellular location is the chloroplast. In terms of biological role, binds to the 23S rRNA. The chain is Large ribosomal subunit protein bL9c from Gracilaria tenuistipitata var. liui (Red alga).